The chain runs to 272 residues: Putative phosphoenolpyruvate synthase regulatory protein (272 aa).

Position 152–159 (152–159 (GVSRCGKT)) interacts with ADP.

Belongs to the pyruvate, phosphate/water dikinase regulatory protein family. PSRP subfamily.

It catalyses the reaction [pyruvate, water dikinase] + ADP = [pyruvate, water dikinase]-phosphate + AMP + H(+). The enzyme catalyses [pyruvate, water dikinase]-phosphate + phosphate + H(+) = [pyruvate, water dikinase] + diphosphate. Its function is as follows. Bifunctional serine/threonine kinase and phosphorylase involved in the regulation of the phosphoenolpyruvate synthase (PEPS) by catalyzing its phosphorylation/dephosphorylation. In Stutzerimonas stutzeri (strain A1501) (Pseudomonas stutzeri), this protein is Putative phosphoenolpyruvate synthase regulatory protein.